The sequence spans 307 residues: 2-methoxy-6-polyprenyl-1,4-benzoquinol methylase, mitochondrial (307 aa).

The transit peptide at Met-1–Leu-19 directs the protein to the mitochondrion. Residues Ser-122, Asp-148, Asn-179 to Gly-180, and Ser-197 each bind S-adenosyl-L-methionine.

This sequence belongs to the class I-like SAM-binding methyltransferase superfamily. MenG/UbiE family. Component of a multi-subunit COQ enzyme complex, composed of at least COQ3, COQ4, COQ5, COQ6, COQ7 and COQ9. Interacts with COQ3.

It localises to the mitochondrion inner membrane. It catalyses the reaction 2-methoxy-6-(all-trans-hexaprenyl)benzene-1,4-diol + S-adenosyl-L-methionine = 5-methoxy-2-methyl-3-(all-trans-hexaprenyl)benzene-1,4-diol + S-adenosyl-L-homocysteine + H(+). The protein operates within cofactor biosynthesis; ubiquinone biosynthesis. Functionally, methyltransferase required for the conversion of 2-hexaprenyl-6-methoxy-1,4-benzoquinol (DDMQH2) to 2-hexaprenyl-3-methyl-6-methoxy-1,4-benzoquinol (DMQH2). This Saccharomyces cerevisiae (strain ATCC 204508 / S288c) (Baker's yeast) protein is 2-methoxy-6-polyprenyl-1,4-benzoquinol methylase, mitochondrial.